Here is a 478-residue protein sequence, read N- to C-terminus: Phosphomannomutase (478 aa).

A helical membrane pass occupies residues 30–46 (FTPEVCARFTISFLTVM). Serine 111 (phosphoserine intermediate) is an active-site residue. Serine 111, aspartate 245, aspartate 247, and aspartate 249 together coordinate Mg(2+). Residues 265 to 284 (ILGLLCSLELAADAVAIPVS) traverse the membrane as a helical segment.

It belongs to the phosphohexose mutase family. The cofactor is Mg(2+).

The protein localises to the cell membrane. The enzyme catalyses alpha-D-mannose 1-phosphate = D-mannose 6-phosphate. The protein operates within nucleotide-sugar biosynthesis; GDP-alpha-D-mannose biosynthesis; alpha-D-mannose 1-phosphate from D-fructose 6-phosphate: step 2/2. It functions in the pathway bacterial outer membrane biogenesis; LPS O-antigen biosynthesis. Functionally, involved in GDP-mannose biosynthesis which serves as the activated sugar nucleotide precursor for mannose residues in cell surface polysaccharides. This enzyme participates in synthesis of the LPS group C2 O antigen. This Salmonella muenchen protein is Phosphomannomutase (manB).